A 341-amino-acid polypeptide reads, in one-letter code: Delta(1)-pyrroline-2-carboxylate/Delta(1)-piperideine-2-carboxylate reductase (341 aa).

Ser-52 serves as the catalytic Charge relay system. Residue His-53 is the Proton donor of the active site. Arg-57 contacts substrate. 125 to 129 (HFAAL) lines the NADP(+) pocket. Thr-165 serves as a coordination point for substrate. 183–185 (DMA) serves as a coordination point for NADP(+). 191–192 (HG) serves as a coordination point for substrate. The active-site Charge relay system is the Asp-193. Residues 235–236 (HK) and 308–314 (RMPGERR) contribute to the NADP(+) site.

Belongs to the LDH2/MDH2 oxidoreductase family. As to quaternary structure, homodimer.

The catalysed reaction is L-pipecolate + NADP(+) = Delta(1)-piperideine-2-carboxylate + NADPH + H(+). The enzyme catalyses L-proline + NADP(+) = 1-pyrroline-2-carboxylate + NADPH + H(+). It carries out the reaction N-methyl-L-alanine + NADP(+) + H2O = methylamine + pyruvate + NADPH + H(+). Its activity is regulated as follows. Is inhibited by the substrate analog pyrrole-2-carboxylate, but not by N-formylphenylalanine. Its function is as follows. Catalyzes the reduction of both Delta(1)-pyrroline-2-carboxylate (Pyr2C) and Delta(1)-piperideine-2-carboxylate (Pip2C) to L-proline and L-pipecolate, respectively, using NADPH as the electron donor. Can use NADH instead of NADPH, although with much less efficiency. Plays an essential role in the catabolism of D-proline and D-lysine, which allows P.putida to grow on each of these amino-acids as a sole carbon source; D-lysine appears to be catabolized only through the pipecolate pathway. Can also catalyze the reverse oxidation reactions, albeit at a much lower rate. To a lesser extent, is able to catalyze in vitro the NADPH-dependent formation of N-alkyl-L-amino acids from the corresponding alpha-oxo acids and alkylamines, e.g. the formation of N-methylalanine from pyruvate and N-methylamine; cannot use ammonia as substrate for these reductive amination reactions. Shows neither malate dehydrogenase nor lactate dehydrogenase activity. In Pseudomonas putida (Arthrobacter siderocapsulatus), this protein is Delta(1)-pyrroline-2-carboxylate/Delta(1)-piperideine-2-carboxylate reductase.